The chain runs to 163 residues: Glycine cleavage system H protein, mitochondrial (163 aa).

Residues 1–34 constitute a mitochondrion transit peptide; that stretch reads MALRMWASSAANALGVSCAPKSHLLPALSLSRCF. The Lipoyl-binding domain maps to 56–137; that stretch reads VATIGITDHA…YEEGWMVKVK (82 aa). The residue at position 96 (Lys-96) is an N6-lipoyllysine.

It belongs to the GcvH family. The glycine cleavage system is composed of four proteins: P, T, L and H. (R)-lipoate is required as a cofactor.

It localises to the mitochondrion. The glycine cleavage system catalyzes the degradation of glycine. The H protein shuttles the methylamine group of glycine from the P protein to the T protein. This chain is Glycine cleavage system H protein, mitochondrial (GDCSH), found in Mesembryanthemum crystallinum (Common ice plant).